The sequence spans 117 residues: NADPH-dependent 7-cyano-7-deazaguanine reductase (117 aa).

The active-site Thioimide intermediate is the C31. D38 functions as the Proton donor in the catalytic mechanism. Substrate contacts are provided by residues 53–55 and 72–73; these read IEL and YE.

It belongs to the GTP cyclohydrolase I family. QueF type 1 subfamily.

The protein localises to the cytoplasm. It carries out the reaction 7-aminomethyl-7-carbaguanine + 2 NADP(+) = 7-cyano-7-deazaguanine + 2 NADPH + 3 H(+). Its pathway is tRNA modification; tRNA-queuosine biosynthesis. Functionally, catalyzes the NADPH-dependent reduction of 7-cyano-7-deazaguanine (preQ0) to 7-aminomethyl-7-deazaguanine (preQ1). The sequence is that of NADPH-dependent 7-cyano-7-deazaguanine reductase from Chlorobaculum tepidum (strain ATCC 49652 / DSM 12025 / NBRC 103806 / TLS) (Chlorobium tepidum).